A 700-amino-acid polypeptide reads, in one-letter code: MAQDVLTDLSKVRNIGIMAHIDAGKTTTTERILYYTGVNYKIGETHDGASTTDWMEQEQERGITITSAAVTCFWNQNQINIIDTPGHVDFTVEVERSLRVLDGAVAVFDGKEGVEPQSEQVWRQADKYDVPRICFVNKMDKLGADFYFTVRTIEERLGARPLVIQLPIGAENDFIGIIDLVEMKAKVWRGETALGEKYEVEEIPADLADKAEEYRTKLIEAVAETDEALLEKYFGGEELSIDEIKGAIRKLTVASELYPVLCGSAFKNKGVQPMLDAVIDYLPSPLDVESVTGHVPNKEDEVISRKPSTDEPFSALAFKIAVHPFFGKLTYVRVYSGTVESGSQVINSTKGKKERLGKLFQMHANKENPVERASAGHIYAVIGLKDTTTGDTLCDANQQIVLESMTFPDPVIEVAIEPKTKSDQEKLGTAIQKLAEEDPTFKVHLDQETGQTVIGGMGELHLDILVDRMRREFKVEANVGKPQVAYRETIRRKVEKVEFTHKKQTGGSGQFAKVLIDLEPFSGEDGATYEFENKVTGGRIPREYIPSVDAGAQDAMQYGVLAGYPLVNIKVTLLDGAFHEVDSSEMAFKVAGSQVLKKAAQAAQPVILEPIMAVEVITPEDYMGDVIGDLNSRRGQIQAMEERSGARVVKAQVPLSEMFGYVGDLRSKTQGRANYSMVFDSYAEVPANVSKEIIAKATGQ.

Positions S10–L286 constitute a tr-type G domain. GTP is bound by residues A19–T26, D83–H87, and N137–D140.

Belongs to the TRAFAC class translation factor GTPase superfamily. Classic translation factor GTPase family. EF-G/EF-2 subfamily.

The protein localises to the cytoplasm. Catalyzes the GTP-dependent ribosomal translocation step during translation elongation. During this step, the ribosome changes from the pre-translocational (PRE) to the post-translocational (POST) state as the newly formed A-site-bound peptidyl-tRNA and P-site-bound deacylated tRNA move to the P and E sites, respectively. Catalyzes the coordinated movement of the two tRNA molecules, the mRNA and conformational changes in the ribosome. In Mycolicibacterium gilvum (strain PYR-GCK) (Mycobacterium gilvum (strain PYR-GCK)), this protein is Elongation factor G.